The chain runs to 1024 residues: Error-prone DNA polymerase (1024 aa).

This sequence belongs to the DNA polymerase type-C family. DnaE2 subfamily.

The protein localises to the cytoplasm. The enzyme catalyses DNA(n) + a 2'-deoxyribonucleoside 5'-triphosphate = DNA(n+1) + diphosphate. Its function is as follows. DNA polymerase involved in damage-induced mutagenesis and translesion synthesis (TLS). It is not the major replicative DNA polymerase. This chain is Error-prone DNA polymerase, found in Vibrio vulnificus (strain CMCP6).